Consider the following 338-residue polypeptide: Oligopeptide transport ATP-binding protein OppD (338 aa).

Residues 7–257 form the ABC transporter domain; the sequence is LEAKQVSVAF…PKHPYTRSLL (251 aa). Residue 43–50 coordinates ATP; it reads GESGSGKS.

Belongs to the ABC transporter superfamily. The complex is composed of two ATP-binding proteins (OppD and OppF), two transmembrane proteins (OppB and OppC) and a solute-binding protein (OppA).

It is found in the cell membrane. The enzyme catalyses a [peptide](out) + ATP + H2O = a [peptide](in) + ADP + phosphate + H(+). Functionally, part of the ABC transporter complex OppABCDF involved in the uptake of oligopeptides. Probably responsible for energy coupling to the transport system. Essential for uptake of peptides larger than three amino acids and for growth in milk. The polypeptide is Oligopeptide transport ATP-binding protein OppD (oppD) (Lactococcus lactis subsp. lactis (strain IL1403) (Streptococcus lactis)).